The chain runs to 580 residues: Type 3 secretion system translocon protein SctE (580 aa).

2 ipgC chaperone binding domain regions span residues 15 to 45 (KILTSTELGDNTIQAANDAANKLFSLTIADL) and 51 to 72 (INTTNAHSTSNILIPELKAPKS). The segment at 61 to 70 (NILIPELKAP) is mediates interaction with human MAD2L2. Residues 104 to 224 (AWKSQQQARQ…MQLEKEIDSF (121 aa)) are a coiled coil. A run of 2 helical transmembrane segments spans residues 313 to 333 (ILGALLTIVSVVAAAFSGGAS) and 399 to 419 (IGSILGAIAGALVLVAAVVLV).

Belongs to the SctE/SipB/YopB family. The core secretion machinery of the T3SS is composed of approximately 20 different proteins, including cytoplasmic components, a base, an export apparatus and a needle. This subunit is involved in the formation of a pore, called the translocon, in host membrane. Interacts with IpaC/SctB. Interacts with the needle tip protein IpaD/SctA. Interacts with the molecular chaperone IpgC, which prevents premature association with IpaC/SctB within the cytoplasm of Shigella cells and protects IpaB/SctE from proteolysis. Interacts with the host protein ICE in the cytoplasm of infected macrophages. Interacts with human MAD2L2 in the G2/M phase of the cell cycle.

Its subcellular location is the secreted. The protein localises to the host membrane. It localises to the host cell. It is found in the host nucleus. Its activity is regulated as follows. Interaction with the membrane is affected by the pH. IpaB/SctE is more efficient in destabilizing the membrane at pH 5.0 than at neutral pH. Functionally, component of the type III secretion system (T3SS), also called injectisome, which is used to inject bacterial effector proteins into eukaryotic host cells. IpaB/SctE and IpaC/SctB are inserted into the host membrane where they form a pore and allow the translocation of effector proteins into the cytosol of target cells. Interaction with IpaD/SctA at needle tips leads to the formation of the MxiH/SctF-IpaD/SctA-IpaB/SctE ternary complex, which is essential for host cell sensing. Interaction of IpaB/SctE with host membrane lipids promotes recruitment of IpaC/SctB at the needle tip concomitant with translocon insertion into the host membrane and type III secretion induction. Its function is as follows. Required for efficient dissemination. Necessary for lysis of the two cellular membranes that surround bacteria in protrusions during cell-to-cell spread. Is sufficient to induce macrophage apoptosis through activation of the interleukin-1 beta converting enzyme (ICE) in infected macrophages. In epithelial cells, causes cell-cycle arrest by targeting host MAD2L2, an anaphase-promoting complex/cyclosome (APC) inhibitor. In Shigella flexneri, this protein is Type 3 secretion system translocon protein SctE.